A 156-amino-acid polypeptide reads, in one-letter code: Small ribosomal subunit protein uS7 (156 aa).

Belongs to the universal ribosomal protein uS7 family. Part of the 30S ribosomal subunit. Contacts proteins S9 and S11.

Its function is as follows. One of the primary rRNA binding proteins, it binds directly to 16S rRNA where it nucleates assembly of the head domain of the 30S subunit. Is located at the subunit interface close to the decoding center, probably blocks exit of the E-site tRNA. This Desulforamulus reducens (strain ATCC BAA-1160 / DSM 100696 / MI-1) (Desulfotomaculum reducens) protein is Small ribosomal subunit protein uS7.